The sequence spans 802 residues: Sucrose synthase 1 (802 aa).

Positions 272–749 are GT-B glycosyltransferase; that stretch reads MMFNVVILSP…GLQRIYEKYT (478 aa).

Belongs to the glycosyltransferase 1 family. Plant sucrose synthase subfamily.

It carries out the reaction an NDP-alpha-D-glucose + D-fructose = a ribonucleoside 5'-diphosphate + sucrose + H(+). Its function is as follows. Sucrose-cleaving enzyme that provides UDP-glucose and fructose for various metabolic pathways. Most active in the sink tissues where it is responsible for the breakdown of the arriving sucrose. This is Sucrose synthase 1 (SH-1) from Zea mays (Maize).